We begin with the raw amino-acid sequence, 460 residues long: Argininosuccinate lyase (460 aa).

It belongs to the lyase 1 family. Argininosuccinate lyase subfamily.

The protein localises to the cytoplasm. It catalyses the reaction 2-(N(omega)-L-arginino)succinate = fumarate + L-arginine. Its pathway is amino-acid biosynthesis; L-arginine biosynthesis; L-arginine from L-ornithine and carbamoyl phosphate: step 3/3. This Mannheimia succiniciproducens (strain KCTC 0769BP / MBEL55E) protein is Argininosuccinate lyase.